The primary structure comprises 226 residues: ATP synthase F(0) complex subunit a (226 aa).

The next 6 membrane-spanning stretches (helical) occupy residues 14–34, 68–88, 97–117, 138–158, 164–184, and 193–213; these read ILGISILPLIMIFPCLLFSAP, WTLMLITLIMFIASTNLLGLL, QLSMNMGMAVPLWLGTVLMGF, IPMLIIIETISLFIQPVALAV, ITAGHLLIHLIGSATLALSSI, and FTILFLLTILEIAVALIQAYV.

This sequence belongs to the ATPase A chain family. As to quaternary structure, component of the ATP synthase complex composed at least of ATP5F1A/subunit alpha, ATP5F1B/subunit beta, ATP5MC1/subunit c (homooctomer), MT-ATP6/subunit a, MT-ATP8/subunit 8, ATP5ME/subunit e, ATP5MF/subunit f, ATP5MG/subunit g, ATP5MK/subunit k, ATP5MJ/subunit j, ATP5F1C/subunit gamma, ATP5F1D/subunit delta, ATP5F1E/subunit epsilon, ATP5PF/subunit F6, ATP5PB/subunit b, ATP5PD/subunit d, ATP5PO/subunit OSCP. ATP synthase complex consists of a soluble F(1) head domain (subunits alpha(3) and beta(3)) - the catalytic core - and a membrane F(0) domain - the membrane proton channel (subunits c, a, 8, e, f, g, k and j). These two domains are linked by a central stalk (subunits gamma, delta, and epsilon) rotating inside the F1 region and a stationary peripheral stalk (subunits F6, b, d, and OSCP). Interacts with DNAJC30; interaction is direct.

It localises to the mitochondrion inner membrane. The catalysed reaction is H(+)(in) = H(+)(out). Its function is as follows. Subunit a, of the mitochondrial membrane ATP synthase complex (F(1)F(0) ATP synthase or Complex V) that produces ATP from ADP in the presence of a proton gradient across the membrane which is generated by electron transport complexes of the respiratory chain. ATP synthase complex consist of a soluble F(1) head domain - the catalytic core - and a membrane F(1) domain - the membrane proton channel. These two domains are linked by a central stalk rotating inside the F(1) region and a stationary peripheral stalk. During catalysis, ATP synthesis in the catalytic domain of F(1) is coupled via a rotary mechanism of the central stalk subunits to proton translocation. With the subunit c (ATP5MC1), forms the proton-conducting channel in the F(0) domain, that contains two crucial half-channels (inlet and outlet) that facilitate proton movement from the mitochondrial intermembrane space (IMS) into the matrix. Protons are taken up via the inlet half-channel and released through the outlet half-channel, following a Grotthuss mechanism. The sequence is that of ATP synthase F(0) complex subunit a from Tachyglossus aculeatus aculeatus (Southeast Australian short-beaked echidna).